A 120-amino-acid chain; its full sequence is Ribosome-binding factor A (120 aa).

Belongs to the RbfA family. In terms of assembly, monomer. Binds 30S ribosomal subunits, but not 50S ribosomal subunits or 70S ribosomes.

It is found in the cytoplasm. Its function is as follows. One of several proteins that assist in the late maturation steps of the functional core of the 30S ribosomal subunit. Associates with free 30S ribosomal subunits (but not with 30S subunits that are part of 70S ribosomes or polysomes). Required for efficient processing of 16S rRNA. May interact with the 5'-terminal helix region of 16S rRNA. The protein is Ribosome-binding factor A of Campylobacter jejuni subsp. jejuni serotype O:6 (strain 81116 / NCTC 11828).